A 170-amino-acid chain; its full sequence is Shikimate kinase (170 aa).

15–20 contributes to the ATP binding site; the sequence is GTGKTT. Thr-19 contributes to the Mg(2+) binding site. 3 residues coordinate substrate: Asp-37, Arg-61, and Gly-82. Residue Arg-120 coordinates ATP. Arg-138 contributes to the substrate binding site. Residue Gln-154 participates in ATP binding.

The protein belongs to the shikimate kinase family. In terms of assembly, monomer. The cofactor is Mg(2+).

The protein localises to the cytoplasm. It carries out the reaction shikimate + ATP = 3-phosphoshikimate + ADP + H(+). The protein operates within metabolic intermediate biosynthesis; chorismate biosynthesis; chorismate from D-erythrose 4-phosphate and phosphoenolpyruvate: step 5/7. In terms of biological role, catalyzes the specific phosphorylation of the 3-hydroxyl group of shikimic acid using ATP as a cosubstrate. The sequence is that of Shikimate kinase from Staphylococcus epidermidis (strain ATCC 35984 / DSM 28319 / BCRC 17069 / CCUG 31568 / BM 3577 / RP62A).